The sequence spans 210 residues: Oligoribonuclease (210 aa).

The region spanning 12-177 (LVWIDLEMTG…ADIVESIREL (166 aa)) is the Exonuclease domain. The active site involves tyrosine 134.

This sequence belongs to the oligoribonuclease family.

It localises to the cytoplasm. In terms of biological role, 3'-to-5' exoribonuclease specific for small oligoribonucleotides. The protein is Oligoribonuclease of Corynebacterium diphtheriae (strain ATCC 700971 / NCTC 13129 / Biotype gravis).